We begin with the raw amino-acid sequence, 130 residues long: Small ribosomal subunit protein uS8 (130 aa).

The protein belongs to the universal ribosomal protein uS8 family. Part of the 30S ribosomal subunit. Contacts proteins S5 and S12.

Its function is as follows. One of the primary rRNA binding proteins, it binds directly to 16S rRNA central domain where it helps coordinate assembly of the platform of the 30S subunit. The protein is Small ribosomal subunit protein uS8 of Shewanella sp. (strain MR-7).